The following is a 316-amino-acid chain: MNVQIGIDLMGGDHSPLVIWEVLIDVLNSRASNSHISFTAFASHEVKEQILSHSTYKGYPEVIASESFITMEDSPLSAIRKKSSSMALGLDYLKEDKIDALISTGNTAALITLSRTKIPMFPTVRRPALLVRVPTMRGCAVILDVGANVSVNPEEMLGFARMGLAYKQCLGDTEHPTVGLLNIGSEERKGTEAHRLTFRLLRETFQHAFLGNIESGDVFSGSVDVVVSDGFTGNIFLKTAEGVFDFLSHILGDKLESDVKRQLDYTIYPGSMVCGLSKLVIKCHGKACGRSLFNGISGSIDLVRARVCERILSSLS.

This sequence belongs to the PlsX family. In terms of assembly, homodimer. Probably interacts with PlsY.

The protein localises to the cytoplasm. The catalysed reaction is a fatty acyl-[ACP] + phosphate = an acyl phosphate + holo-[ACP]. It functions in the pathway lipid metabolism; phospholipid metabolism. Functionally, catalyzes the reversible formation of acyl-phosphate (acyl-PO(4)) from acyl-[acyl-carrier-protein] (acyl-ACP). This enzyme utilizes acyl-ACP as fatty acyl donor, but not acyl-CoA. The chain is Phosphate acyltransferase from Chlamydia abortus (strain DSM 27085 / S26/3) (Chlamydophila abortus).